The primary structure comprises 150 residues: UPF0260 protein VIBHAR_03078 (150 aa).

The protein belongs to the UPF0260 family.

This chain is UPF0260 protein VIBHAR_03078, found in Vibrio campbellii (strain ATCC BAA-1116).